A 255-amino-acid polypeptide reads, in one-letter code: NAD kinase (255 aa).

Aspartate 44 functions as the Proton acceptor in the catalytic mechanism. NAD(+) contacts are provided by residues 44-45 (DG), histidine 49, 114-115 (NE), aspartate 144, alanine 152, 155-160 (SAYNLS), and glutamine 216.

This sequence belongs to the NAD kinase family. A divalent metal cation serves as cofactor.

It localises to the cytoplasm. It catalyses the reaction NAD(+) + ATP = ADP + NADP(+) + H(+). Its function is as follows. Involved in the regulation of the intracellular balance of NAD and NADP, and is a key enzyme in the biosynthesis of NADP. Catalyzes specifically the phosphorylation on 2'-hydroxyl of the adenosine moiety of NAD to yield NADP. The protein is NAD kinase of Rickettsia rickettsii (strain Iowa).